Reading from the N-terminus, the 250-residue chain is Homeobox protein Dlx4a (250 aa).

The segment at residues 123–182 is a DNA-binding region (homeobox); that stretch reads IRKPRTIYSSLQLQALNQRFQQTQYLALPERADLAAKLGLTQTQVKIWFQNKRSKYKKIM. The tract at residues 182 to 202 is disordered; the sequence is MKHGSSGPEGEHLQAASASGA.

Belongs to the distal-less homeobox family.

Its subcellular location is the nucleus. The chain is Homeobox protein Dlx4a (dlx4a) from Danio rerio (Zebrafish).